A 481-amino-acid polypeptide reads, in one-letter code: Aspartyl/glutamyl-tRNA(Asn/Gln) amidotransferase subunit B (481 aa).

The protein belongs to the GatB/GatE family. GatB subfamily. As to quaternary structure, heterotrimer of A, B and C subunits.

The enzyme catalyses L-glutamyl-tRNA(Gln) + L-glutamine + ATP + H2O = L-glutaminyl-tRNA(Gln) + L-glutamate + ADP + phosphate + H(+). It carries out the reaction L-aspartyl-tRNA(Asn) + L-glutamine + ATP + H2O = L-asparaginyl-tRNA(Asn) + L-glutamate + ADP + phosphate + 2 H(+). Allows the formation of correctly charged Asn-tRNA(Asn) or Gln-tRNA(Gln) through the transamidation of misacylated Asp-tRNA(Asn) or Glu-tRNA(Gln) in organisms which lack either or both of asparaginyl-tRNA or glutaminyl-tRNA synthetases. The reaction takes place in the presence of glutamine and ATP through an activated phospho-Asp-tRNA(Asn) or phospho-Glu-tRNA(Gln). The chain is Aspartyl/glutamyl-tRNA(Asn/Gln) amidotransferase subunit B from Pseudomonas aeruginosa (strain LESB58).